A 211-amino-acid chain; its full sequence is Thiamine-phosphate synthase (211 aa).

4-amino-2-methyl-5-(diphosphooxymethyl)pyrimidine contacts are provided by residues 39-43 (QLREK) and Asn71. Mg(2+) contacts are provided by Asp72 and Asp91. Ser110 is a binding site for 4-amino-2-methyl-5-(diphosphooxymethyl)pyrimidine. 136–138 (TAT) contributes to the 2-[(2R,5Z)-2-carboxy-4-methylthiazol-5(2H)-ylidene]ethyl phosphate binding site. Residue Lys139 participates in 4-amino-2-methyl-5-(diphosphooxymethyl)pyrimidine binding. 2-[(2R,5Z)-2-carboxy-4-methylthiazol-5(2H)-ylidene]ethyl phosphate-binding positions include Ala167 and 187–188 (VS).

It belongs to the thiamine-phosphate synthase family. Mg(2+) serves as cofactor.

The catalysed reaction is 2-[(2R,5Z)-2-carboxy-4-methylthiazol-5(2H)-ylidene]ethyl phosphate + 4-amino-2-methyl-5-(diphosphooxymethyl)pyrimidine + 2 H(+) = thiamine phosphate + CO2 + diphosphate. It carries out the reaction 2-(2-carboxy-4-methylthiazol-5-yl)ethyl phosphate + 4-amino-2-methyl-5-(diphosphooxymethyl)pyrimidine + 2 H(+) = thiamine phosphate + CO2 + diphosphate. It catalyses the reaction 4-methyl-5-(2-phosphooxyethyl)-thiazole + 4-amino-2-methyl-5-(diphosphooxymethyl)pyrimidine + H(+) = thiamine phosphate + diphosphate. It functions in the pathway cofactor biosynthesis; thiamine diphosphate biosynthesis; thiamine phosphate from 4-amino-2-methyl-5-diphosphomethylpyrimidine and 4-methyl-5-(2-phosphoethyl)-thiazole: step 1/1. Functionally, condenses 4-methyl-5-(beta-hydroxyethyl)thiazole monophosphate (THZ-P) and 2-methyl-4-amino-5-hydroxymethyl pyrimidine pyrophosphate (HMP-PP) to form thiamine monophosphate (TMP). This is Thiamine-phosphate synthase from Solidesulfovibrio magneticus (strain ATCC 700980 / DSM 13731 / RS-1) (Desulfovibrio magneticus).